The sequence spans 344 residues: Uroporphyrinogen decarboxylase (344 aa).

Substrate is bound by residues 26 to 30, F45, D75, Y151, S206, and H320; that span reads RQAGR.

The protein belongs to the uroporphyrinogen decarboxylase family. In terms of assembly, homodimer.

The protein localises to the cytoplasm. It catalyses the reaction uroporphyrinogen III + 4 H(+) = coproporphyrinogen III + 4 CO2. Its pathway is porphyrin-containing compound metabolism; protoporphyrin-IX biosynthesis; coproporphyrinogen-III from 5-aminolevulinate: step 4/4. Functionally, catalyzes the decarboxylation of four acetate groups of uroporphyrinogen-III to yield coproporphyrinogen-III. The polypeptide is Uroporphyrinogen decarboxylase (Staphylococcus haemolyticus (strain JCSC1435)).